A 583-amino-acid chain; its full sequence is Glycine--tRNA ligase (583 aa).

2 residues coordinate substrate: arginine 100 and glutamate 166. Residues 198–200, 208–213, 328–329, and 443–446 each bind ATP; these read RNE, VRLREF, EV, and GTDR. 213-217 lines the substrate pocket; sequence FTIME. Substrate is bound at residue 439 to 443; it reads EPSFG.

It belongs to the class-II aminoacyl-tRNA synthetase family.

Its subcellular location is the cytoplasm. It carries out the reaction tRNA(Gly) + glycine + ATP = glycyl-tRNA(Gly) + AMP + diphosphate. In terms of biological role, catalyzes the attachment of glycine to tRNA(Gly). The chain is Glycine--tRNA ligase from Aeropyrum pernix (strain ATCC 700893 / DSM 11879 / JCM 9820 / NBRC 100138 / K1).